The following is a 226-amino-acid chain: Thiocyanate methyltransferase 1 (226 aa).

4 residues coordinate S-adenosyl-L-methionine: Trp-35, Trp-39, Trp-46, and Gly-73. Ser-85 carries the phosphoserine modification. S-adenosyl-L-methionine is bound by residues Asp-94, 122-123 (DF), and Tyr-138.

This sequence belongs to the class I-like SAM-binding methyltransferase superfamily. TPMT family. In terms of tissue distribution, ubiquitous.

It catalyses the reaction thiocyanate + S-adenosyl-L-methionine = methyl thiocyanate + S-adenosyl-L-homocysteine. In terms of biological role, S-adenosyl-L-methionine-dependent methyltransferase. Probably involved in glucosinolate metabolism and defense against phytopathogens. Highly reactive to thiocyanate (NCS(-)) derived from myrosinase-mediated hydrolysis of glucosinolates upon tissue damage. Also accepts halid ions as substrates with a lower affinity. The chain is Thiocyanate methyltransferase 1 (TMT1) from Brassica oleracea (Wild cabbage).